A 603-amino-acid polypeptide reads, in one-letter code: Geraniol synthase Tps-5031G8, chloroplastic (603 aa).

The transit peptide at 1 to 35 (MCSISQKVVIGLNKAAANNCLQNLDRRGFKTRRVS) directs the protein to the chloroplast. 5 residues coordinate (2E)-geranyl diphosphate: arginine 319, aspartate 356, aspartate 360, arginine 497, and aspartate 500. Mg(2+) contacts are provided by aspartate 356 and aspartate 360. The short motif at 356-360 (DDVYD) is the DDXXD motif element. Mg(2+) is bound by residues aspartate 500, threonine 504, and glutamate 508.

The protein belongs to the terpene synthase family. Tpsb subfamily. In terms of assembly, monomer. Requires Mg(2+) as cofactor. It depends on Mn(2+) as a cofactor.

It localises to the plastid. It is found in the chloroplast. The catalysed reaction is (2E)-geranyl diphosphate + H2O = (2E)-geraniol + diphosphate. Its pathway is secondary metabolite biosynthesis; terpenoid biosynthesis. Its function is as follows. Monoterpene synthase (mono-TPS) involved in the biosynthesis of monoterpenes natural products. Catalyzes the conversion of (2E)-geranyl diphosphate (GPP) into geraniol. The sequence is that of Geraniol synthase Tps-5031G8, chloroplastic from Perilla frutescens var. hirtella (Perilla citriodora).